We begin with the raw amino-acid sequence, 133 residues long: Small ribosomal subunit protein bS6 (133 aa).

This sequence belongs to the bacterial ribosomal protein bS6 family.

Its function is as follows. Binds together with bS18 to 16S ribosomal RNA. The polypeptide is Small ribosomal subunit protein bS6 (Chlorobium luteolum (strain DSM 273 / BCRC 81028 / 2530) (Pelodictyon luteolum)).